Here is a 514-residue protein sequence, read N- to C-terminus: Synaptic vesicular amine transporter (514 aa).

The Cytoplasmic segment spans residues 1–20; that stretch reads MALSELALVRWLQESRRSRK. The helical transmembrane segment at 21 to 41 threads the bilayer; it reads LILFIVFLALLLDNMLLTVVV. Over 42–129 the chain is Lumenal, vesicle; that stretch reads PIIPSYLYSI…EDKDLLNENV (88 aa). N84 and N91 each carry an N-linked (GlcNAc...) asparagine glycan. An intrachain disulfide couples C117 to C324. Residues 130–150 traverse the membrane as a helical segment; that stretch reads QVGLLFASKATVQLITNPFIG. The Cytoplasmic segment spans residues 151 to 159; that stretch reads LLTNRIGYP. A helical transmembrane segment spans residues 160-180; it reads IPIFAGFCIMFVSTIMFAFSS. Topologically, residues 181–189 are lumenal, vesicle; sequence SYAFLLIAR. The helical transmembrane segment at 190-210 threads the bilayer; sequence SLQGIGSSCSSVAGMGMLASV. The Cytoplasmic portion of the chain corresponds to 211-219; that stretch reads YTDDEERGN. The helical transmembrane segment at 220–242 threads the bilayer; that stretch reads VMGIALGGLAMGVLVGPPFGSVL. L228 and V232 together coordinate serotonin. Over 243–248 the chain is Lumenal, vesicle; that stretch reads YEFVGK. A helical transmembrane segment spans residues 249-271; that stretch reads TAPFLVLAALVLLDGAIQLFVLQ. Residues 272–291 lie on the Cytoplasmic side of the membrane; it reads PSRVQPESQKGTPLTTLLKD. A helical membrane pass occupies residues 292 to 311; sequence PYILIAAGSICFANMGIAML. 5 residues coordinate serotonin: N305, I308, E312, F334, and Y341. Over 312-328 the chain is Lumenal, vesicle; that stretch reads EPALPIWMMETMCSRKW. Residues 329–352 form a helical membrane-spanning segment; sequence QLGVAFLPASISYLIGTNIFGILA. Over 353–357 the chain is Cytoplasmic; the sequence is HKMGR. Residues 358-378 traverse the membrane as a helical segment; sequence WLCALLGMIIVGVSILCIPFA. At 379-389 the chain is on the lumenal, vesicle side; the sequence is KNIYGLIAPNF. A helical transmembrane segment spans residues 390–410; sequence GVGFAIGMVDSSMMPIMGYLV. D399 is a serotonin binding site. Over 411–414 the chain is Cytoplasmic; it reads DLRH. The chain crosses the membrane as a helical span at residues 415 to 435; the sequence is VSVYGSVYAIADVAFCMGYAI. Y433 provides a ligand contact to serotonin. The Lumenal, vesicle segment spans residues 436–440; the sequence is GPSAG. Residues 441 to 462 form a helical membrane-spanning segment; the sequence is GAIAKAIGFPWLMTIIGIIDIL. Residues 463-514 lie on the Cytoplasmic side of the membrane; the sequence is FAPLCFFLRSPPAKEEKMAILMDHNCPIKTKMYTQNNIQSYPIGEDEESESD. Residues S511 and S513 each carry the phosphoserine modification.

It belongs to the major facilitator superfamily. Vesicular transporter family. Interacts with SLC6A3. As to expression, expressed in neuronal and neuroendocrine tissues. Detected in central and peripheral nervous system in particular in axonal and dendritic processes in dopaminergic cells of substantia nigra, histaminergic neuronal cell bodies of substantia nigra and tuberomammillary nucleus, in ganglion cells of sympathetic glia and in peripheral sympathetic nerve terminals in stomach and duodenum (at protein level). Highly expressed in chromaffin cells of the adrenal medulla and histamine-storing enterochromaffin-like cells of oxyntic mucosa (at protein level).

The protein localises to the cytoplasmic vesicle. Its subcellular location is the secretory vesicle. The protein resides in the synaptic vesicle membrane. It localises to the secretory vesicle membrane. It is found in the cell projection. The protein localises to the axon. Its subcellular location is the dendrite. The enzyme catalyses serotonin(in) + 2 H(+)(out) = serotonin(out) + 2 H(+)(in). The catalysed reaction is dopamine(in) + 2 H(+)(out) = dopamine(out) + 2 H(+)(in). It catalyses the reaction histamine(in) + 2 H(+)(out) = histamine(out) + 2 H(+)(in). Strongly inhibited by reserpine and tetrabenazine. Also inhibited to a lesser extent by ketanserin and fenfluramine. Reserpine and ketanserin inhibit by blocking the substrate-binding pocket. Tetrabenazine traps SLC18A2/VMAT2 in an occluded conformation and its inhibition is specific to SLC18A2/VMAT2 but not SLC18A1/VMAT1. In terms of biological role, electrogenic antiporter that exchanges one cationic monoamine with two intravesicular protons across the membrane of secretory and synaptic vesicles. Uses the electrochemical proton gradient established by the V-type proton-pump ATPase to accumulate high concentrations of monoamines inside the vesicles prior to their release via exocytosis. Transports a variety of catecholamines such as dopamine, adrenaline and noradrenaline, histamine, and indolamines such as serotonin. Regulates the transvesicular monoaminergic gradient that determines the quantal size. Mediates somatodendritic dopamine release in hippocampal neurons, likely as part of a regulated secretory pathway that integrates retrograde synaptic signals. Acts as a primary transporter for striatal dopamine loading ensuring impulse-dependent release of dopamine at the synaptic cleft. Responsible for histamine and serotonin storage and subsequent corelease from mast cell granules. The protein is Synaptic vesicular amine transporter (SLC18A2) of Homo sapiens (Human).